The primary structure comprises 151 residues: Small ribosomal subunit protein uS15 (151 aa).

Basic residues predominate over residues 1-16 (MPHRSRDKKGRSRSVR). The interval 1 to 20 (MPHRSRDKKGRSRSVRPAHP) is disordered.

Belongs to the universal ribosomal protein uS15 family. In terms of assembly, part of the 30S ribosomal subunit.

This is Small ribosomal subunit protein uS15 from Pyrobaculum aerophilum (strain ATCC 51768 / DSM 7523 / JCM 9630 / CIP 104966 / NBRC 100827 / IM2).